Consider the following 113-residue polypeptide: Nucleoid-associated protein ROP_41370 (113 aa).

It belongs to the YbaB/EbfC family. As to quaternary structure, homodimer.

It localises to the cytoplasm. The protein resides in the nucleoid. Its function is as follows. Binds to DNA and alters its conformation. May be involved in regulation of gene expression, nucleoid organization and DNA protection. This chain is Nucleoid-associated protein ROP_41370, found in Rhodococcus opacus (strain B4).